Here is a 474-residue protein sequence, read N- to C-terminus: Bifunctional protein HldE (474 aa).

The tract at residues methionine 1–asparagine 318 is ribokinase. Position 195–198 (asparagine 195–glutamate 198) interacts with ATP. Residue aspartate 264 is part of the active site. The segment at methionine 344–lysine 474 is cytidylyltransferase.

This sequence in the N-terminal section; belongs to the carbohydrate kinase PfkB family. The protein in the C-terminal section; belongs to the cytidylyltransferase family. As to quaternary structure, homodimer.

The enzyme catalyses D-glycero-beta-D-manno-heptose 7-phosphate + ATP = D-glycero-beta-D-manno-heptose 1,7-bisphosphate + ADP + H(+). The catalysed reaction is D-glycero-beta-D-manno-heptose 1-phosphate + ATP + H(+) = ADP-D-glycero-beta-D-manno-heptose + diphosphate. It participates in nucleotide-sugar biosynthesis; ADP-L-glycero-beta-D-manno-heptose biosynthesis; ADP-L-glycero-beta-D-manno-heptose from D-glycero-beta-D-manno-heptose 7-phosphate: step 1/4. The protein operates within nucleotide-sugar biosynthesis; ADP-L-glycero-beta-D-manno-heptose biosynthesis; ADP-L-glycero-beta-D-manno-heptose from D-glycero-beta-D-manno-heptose 7-phosphate: step 3/4. Functionally, catalyzes the phosphorylation of D-glycero-D-manno-heptose 7-phosphate at the C-1 position to selectively form D-glycero-beta-D-manno-heptose-1,7-bisphosphate. Its function is as follows. Catalyzes the ADP transfer from ATP to D-glycero-beta-D-manno-heptose 1-phosphate, yielding ADP-D-glycero-beta-D-manno-heptose. This is Bifunctional protein HldE from Proteus mirabilis (strain HI4320).